The sequence spans 1037 residues: Guanine nucleotide-binding protein G(s) subunit alpha isoforms XLas (1037 aa).

Disordered regions lie at residues 1–105, 185–224, 283–588, and 640–666; these read MGVR…MPFE, APGG…EETM, SPSQ…TSGC, and PLAE…KKRS. A compositionally biased stretch (low complexity) spans 33–46; it reads APGAAAPGAGPSPA. The segment covering 343 to 354 has biased composition (basic and acidic residues); sequence PDKRERAERPPV. Composition is skewed to low complexity over residues 361 to 408 and 416 to 521; these read MEGA…GATP and APAD…PASG. Residues 553 to 565 are compositionally biased toward basic and acidic residues; the sequence is GKSESSRGRRVYY. Acidic residues predominate over residues 572–583; that stretch reads SDDDSSGDESDD. The segment covering 640 to 660 has biased composition (basic and acidic residues); the sequence is PLAEKRRQMRKEALEKRAQKR. A coiled-coil region spans residues 641–667; sequence LAEKRRQMRKEALEKRAQKRAEKKRSK. The G-alpha domain occupies 682 to 1037; the sequence is CTHRLLLLGA…RMHLRQYELL (356 aa). The segment at 685 to 698 is G1 motif; sequence RLLLLGAGESGKST. Position 690–698 (690–698) interacts with GTP; the sequence is GAGESGKST. Position 697 (S697) interacts with Mg(2+). The segment at 711–734 is disordered; it reads FNGEGGEEDPQAARSNSDGEKATK. Positions 730 to 756 form a coiled coil; sequence EKATKVQDIKNNLKEAIETIVAAMSNL. The tract at residues 839-847 is G2 motif; it reads DLLRCRVLT. GTP-binding positions include 840–847, 866–870, and 935–938; these read LLRCRVLT, DVGGQ, and NKQD. Residue R844 is modified to ADP-ribosylarginine; by cholera toxin. Mg(2+) is bound at residue T847. The tract at residues 862 to 871 is G3 motif; that stretch reads FHMFDVGGQR. The interval 931-938 is G4 motif; sequence ILFLNKQD. S995 carries the phosphoserine modification. The G5 motif stretch occupies residues 1007 to 1012; the sequence is TCAVDT. A1009 contributes to the GTP binding site.

Belongs to the G-alpha family. G(s) subfamily. G proteins are composed of 3 units; alpha, beta and gamma. The alpha chain contains the guanine nucleotide binding site. Interacts through its N-terminal region with ALEX which is produced from the same locus in a different open reading frame. This interaction may inhibit its adenylyl cyclase-stimulating activity. Interacts with MAGED2.

Its subcellular location is the cell membrane. The protein localises to the apical cell membrane. The catalysed reaction is GTP + H2O = GDP + phosphate + H(+). In terms of biological role, guanine nucleotide-binding proteins (G proteins) function as transducers in numerous signaling pathways controlled by G protein-coupled receptors (GPCRs). The alpha chain contains the guanine nucleotide binding site and alternates between an active, GTP-bound state and an inactive, GDP-bound state. Signaling by an activated GPCR promotes GDP release and GTP binding. The alpha subunit has a low GTPase activity that converts bound GTP to GDP, thereby terminating the signal. Both GDP release and GTP hydrolysis are modulated by numerous regulatory proteins. Signaling involves the activation of adenylyl cyclases, resulting in increased levels of the signaling molecule cAMP. GNAS functions downstream of several GPCRs, including beta-adrenergic receptors. XLas isoforms interact with the same set of receptors as Gnas isoforms. The protein is Guanine nucleotide-binding protein G(s) subunit alpha isoforms XLas (GNAS) of Homo sapiens (Human).